The following is a 557-amino-acid chain: Urocanate hydratase (557 aa).

The interval 1 to 20 (MSNPRHNEREVRSPRGDELN) is disordered. NAD(+) contacts are provided by residues 52 to 53 (GG), Gln130, 176 to 178 (GMG), Glu196, Arg201, 242 to 243 (NA), 263 to 267 (QTSAH), 273 to 274 (YL), and Tyr322. The active site involves Cys410. Position 492 (Gly492) interacts with NAD(+).

This sequence belongs to the urocanase family. The cofactor is NAD(+).

Its subcellular location is the cytoplasm. It catalyses the reaction 4-imidazolone-5-propanoate = trans-urocanate + H2O. The protein operates within amino-acid degradation; L-histidine degradation into L-glutamate; N-formimidoyl-L-glutamate from L-histidine: step 2/3. Its function is as follows. Catalyzes the conversion of urocanate to 4-imidazolone-5-propionate. This Brucella anthropi (strain ATCC 49188 / DSM 6882 / CCUG 24695 / JCM 21032 / LMG 3331 / NBRC 15819 / NCTC 12168 / Alc 37) (Ochrobactrum anthropi) protein is Urocanate hydratase.